The chain runs to 109 residues: Ribonuclease P protein component 4 (109 aa).

C65, C68, C94, and C97 together coordinate Zn(2+).

The protein belongs to the eukaryotic/archaeal RNase P protein component 4 family. As to quaternary structure, consists of a catalytic RNA component and at least 4-5 protein subunits. Zn(2+) serves as cofactor.

Its subcellular location is the cytoplasm. It carries out the reaction Endonucleolytic cleavage of RNA, removing 5'-extranucleotides from tRNA precursor.. Part of ribonuclease P, a protein complex that generates mature tRNA molecules by cleaving their 5'-ends. This is Ribonuclease P protein component 4 from Methanococcus vannielii (strain ATCC 35089 / DSM 1224 / JCM 13029 / OCM 148 / SB).